A 598-amino-acid polypeptide reads, in one-letter code: Dihydroxy-acid dehydratase, mitochondrial (598 aa).

The transit peptide at 1-18 (MMFCKLLRCQNGIASKRA) directs the protein to the mitochondrion. C84 is a [2Fe-2S] cluster binding site. D116 provides a ligand contact to Mg(2+). C157 contacts [2Fe-2S] cluster. Residue D158 coordinates Mg(2+). C232 contributes to the [2Fe-2S] cluster binding site. E485 contacts Mg(2+). The active-site Proton acceptor is the S511.

It belongs to the IlvD/Edd family. The cofactor is [2Fe-2S] cluster. Mg(2+) serves as cofactor.

The protein localises to the mitochondrion. It catalyses the reaction (2R)-2,3-dihydroxy-3-methylbutanoate = 3-methyl-2-oxobutanoate + H2O. The catalysed reaction is (2R,3R)-2,3-dihydroxy-3-methylpentanoate = (S)-3-methyl-2-oxopentanoate + H2O. Its pathway is amino-acid biosynthesis; L-isoleucine biosynthesis; L-isoleucine from 2-oxobutanoate: step 3/4. It functions in the pathway amino-acid biosynthesis; L-valine biosynthesis; L-valine from pyruvate: step 3/4. Dihydroxyacid dehydratase that catalyzes the third step in the common pathway leading to biosynthesis of branched-chain amino acids. Catalyzes the dehydration of (2R,3R)-2,3-dihydroxy-3-methylpentanoate (2,3-dihydroxy-3-methylvalerate) into 2-oxo-3-methylpentanoate (2-oxo-3-methylvalerate) and of (2R)-2,3-dihydroxy-3-methylbutanoate (2,3-dihydroxyisovalerate) into 2-oxo-3-methylbutanoate (2-oxoisovalerate), the penultimate precursor to L-isoleucine and L-valine, respectively. The polypeptide is Dihydroxy-acid dehydratase, mitochondrial (Schizosaccharomyces pombe (strain 972 / ATCC 24843) (Fission yeast)).